Reading from the N-terminus, the 393-residue chain is Methylthioribose kinase (393 aa).

ATP is bound by residues asparagine 38, lysine 53, and 107–109; that span reads EDL. Residue aspartate 225 coordinates substrate. ATP is bound at residue 242-244; that stretch reads DPE. Arginine 332 serves as a coordination point for substrate.

It belongs to the methylthioribose kinase family. In terms of assembly, homodimer.

It carries out the reaction 5-(methylsulfanyl)-D-ribose + ATP = 5-(methylsulfanyl)-alpha-D-ribose 1-phosphate + ADP + H(+). The protein operates within amino-acid biosynthesis; L-methionine biosynthesis via salvage pathway; S-methyl-5-thio-alpha-D-ribose 1-phosphate from S-methyl-5'-thioadenosine (hydrolase route): step 2/2. Catalyzes the phosphorylation of methylthioribose into methylthioribose-1-phosphate. This is Methylthioribose kinase from Bacillus thuringiensis subsp. konkukian (strain 97-27).